We begin with the raw amino-acid sequence, 209 residues long: High frequency lysogenization protein HflD homolog (209 aa).

This sequence belongs to the HflD family.

It localises to the cytoplasm. Its subcellular location is the cell inner membrane. This is High frequency lysogenization protein HflD homolog from Saccharophagus degradans (strain 2-40 / ATCC 43961 / DSM 17024).